Reading from the N-terminus, the 629-residue chain is Glycerol-3-phosphate dehydrogenase SDP6, mitochondrial (629 aa).

Residues 1–48 (MSLASIRRLAAGAAVIAAASGGAVYLSPSVASSDKGGGPILDSLRRRL) constitute a mitochondrion transit peptide. 75–103 (DVLVIGGGATGSGVALDAVTRGLRVGLVE) lines the FAD pocket.

The protein belongs to the FAD-dependent glycerol-3-phosphate dehydrogenase family. FAD serves as cofactor. In terms of tissue distribution, expressed in germinating seedlings. Also detected in roots, leaves, flowers, developing siliques and germinating seeds.

The protein localises to the mitochondrion inner membrane. It carries out the reaction a quinone + sn-glycerol 3-phosphate = dihydroxyacetone phosphate + a quinol. The protein operates within polyol metabolism; glycerol degradation via glycerol kinase pathway; glycerone phosphate from sn-glycerol 3-phosphate (anaerobic route): step 1/1. In terms of biological role, required for glycerol catabolism and involved in NADH/NAD(+) homeostasis. Essential for postgerminative growth and seedling establishment. The sequence is that of Glycerol-3-phosphate dehydrogenase SDP6, mitochondrial from Arabidopsis thaliana (Mouse-ear cress).